A 950-amino-acid polypeptide reads, in one-letter code: UPF0182 protein P9303_14611 (950 aa).

9 helical membrane-spanning segments follow: residues 20–40 (LLLS…WLWF), 53–73 (WLWQ…CQLW), 102–122 (LLGC…LAWL), 141–161 (IWAL…MLGN), 173–193 (CFCF…ALAI), 209–229 (FGLG…AQLV), 259–279 (CDVM…LLWL), 308–328 (SLAS…PWIQ), and 335–355 (LIAS…APFV).

The protein belongs to the UPF0182 family.

The protein localises to the cell membrane. The sequence is that of UPF0182 protein P9303_14611 from Prochlorococcus marinus (strain MIT 9303).